The primary structure comprises 816 residues: Phosphatidylinositol 4-kinase beta (816 aa).

Disordered stretches follow at residues 1–28, 93–120, and 249–318; these read MGDT…NGGS, PPTG…RRRR, and HRKR…SFSS. At Gly-2 the chain carries N-acetylglycine. The interaction with ACBD3 stretch occupies residues 2-68; sequence GDTVVAPAPL…VKLSHGGVAS (67 aa). The region spanning 49 to 242 is the PIK helical domain; sequence QKACQEVLQK…GTKLRRLILS (194 aa). Position 258 is a phosphoserine (Ser-258). Residue Thr-263 is modified to Phosphothreonine. 7 positions are modified to phosphoserine: Ser-266, Ser-275, Ser-277, Ser-284, Ser-294, Ser-428, and Ser-511. Over residues 278-294 the composition is skewed to low complexity; sequence DATASISLSSSLKRTAS. 2 positions are modified to phosphothreonine: Thr-517 and Thr-519. The 267-residue stretch at 535–801 folds into the PI3K/PI4K catalytic domain; the sequence is EPWQEKVRRI…MVDGSMRSIT (267 aa). The G-loop stretch occupies residues 541-547; the sequence is VRRIREG. The tract at residues 668–676 is catalytic loop; it reads QVKDRHNGN. The tract at residues 687–711 is activation loop; sequence HIDFGFILSSSPRNLGFETSAFKLT.

It belongs to the PI3/PI4-kinase family. Type III PI4K subfamily. In terms of assembly, interacts with ARF1 and ARF3 in the Golgi complex, but not with ARF4, ARF5 or ARF6. Interacts with NCS1/FREQ in a calcium-independent manner. Interacts with CALN1/CABP8 and CALN2/CABP7; in a calcium-dependent manner; this interaction competes with NCS1/FREQ binding. Interacts with ACBD3. Interacts with ARMH3, YWHAB, YWHAE, YWHAG, YWHAH, YWHAQ, YWHAZ and SFN. Interacts with GGA2 (via VHS domain); the interaction is important for PI4KB location at the Golgi apparatus membrane. Interacts with ATG9A. Requires Mg(2+) as cofactor. The cofactor is Mn(2+).

It is found in the endomembrane system. Its subcellular location is the mitochondrion outer membrane. The protein localises to the rough endoplasmic reticulum membrane. It localises to the golgi apparatus. The protein resides in the golgi apparatus membrane. It carries out the reaction a 1,2-diacyl-sn-glycero-3-phospho-(1D-myo-inositol) + ATP = a 1,2-diacyl-sn-glycero-3-phospho-(1D-myo-inositol 4-phosphate) + ADP + H(+). Inhibited by wortmannin. Increased kinase activity upon interaction with NCS1/FREQ. Phosphorylates phosphatidylinositol (PI) in the first committed step in the production of the second messenger inositol-1,4,5,-trisphosphate (PIP). May regulate Golgi disintegration/reorganization during mitosis, possibly via its phosphorylation. Involved in Golgi-to-plasma membrane trafficking. May play an important role in the inner ear development. The chain is Phosphatidylinositol 4-kinase beta (PI4KB) from Rhinolophus ferrumequinum (Greater horseshoe bat).